Consider the following 1034-residue polypeptide: Ice nucleation protein InaU (1034 aa).

An octapeptide periodicity region spans residues 162–993 (ATYGSTLSGT…LTAGENSVLI (832 aa)). 6 disordered regions span residues 260 to 287 (YGSTQTAGEDSSLTAGYGSTQTAQKGSD), 311 to 342 (TQTAGEESTQTAGYGSTQTAQKGSDLTAGYGS), 356 to 383 (YGSTQTAGEDSSLTAGYGSTQTAQKGSD), 407 to 438 (TQTAGEESTQTAGYGSTQTAQKGSDLTAGYGS), 452 to 480 (YGSTQTAGEDSSLTAGYGSTQTAQKGSDL), and 570 to 597 (AREGSDLTAGYGSTQTAQENSDLTTGYG). Composition is skewed to polar residues over residues 261–286 (GSTQTAGEDSSLTAGYGSTQTAQKGS), 311–334 (TQTAGEESTQTAGYGSTQTAQKGS), 357–382 (GSTQTAGEDSSLTAGYGSTQTAQKGS), 407–430 (TQTAGEESTQTAGYGSTQTAQKGS), 453–480 (GSTQTAGEDSSLTAGYGSTQTAQKGSDL), and 580–592 (YGSTQTAQENSDL).

The protein belongs to the bacterial ice nucleation protein family.

The protein resides in the cell outer membrane. Its function is as follows. Ice nucleation proteins enable bacteria to nucleate crystallization in supercooled water. This Pantoea ananas (Erwinia uredovora) protein is Ice nucleation protein InaU (inaU).